Consider the following 351-residue polypeptide: Ferrochelatase (351 aa).

Residues H220 and E301 each contribute to the Fe cation site.

Belongs to the ferrochelatase family.

It localises to the cytoplasm. The catalysed reaction is heme b + 2 H(+) = protoporphyrin IX + Fe(2+). It participates in porphyrin-containing compound metabolism; protoheme biosynthesis; protoheme from protoporphyrin-IX: step 1/1. Functionally, catalyzes the ferrous insertion into protoporphyrin IX. The protein is Ferrochelatase of Rhodobacter capsulatus (Rhodopseudomonas capsulata).